The chain runs to 380 residues: tRNA-specific 2-thiouridylase MnmA (380 aa).

Residues 6-13 (ALSGGVDS) and methionine 32 contribute to the ATP site. Residue cysteine 101 is the Nucleophile of the active site. Cysteine 101 and cysteine 199 are joined by a disulfide. Glycine 125 lines the ATP pocket. An interaction with tRNA region spans residues 148-150 (KDQ). The Cysteine persulfide intermediate role is filled by cysteine 199.

It belongs to the MnmA/TRMU family.

It localises to the cytoplasm. The enzyme catalyses S-sulfanyl-L-cysteinyl-[protein] + uridine(34) in tRNA + AH2 + ATP = 2-thiouridine(34) in tRNA + L-cysteinyl-[protein] + A + AMP + diphosphate + H(+). In terms of biological role, catalyzes the 2-thiolation of uridine at the wobble position (U34) of tRNA, leading to the formation of s(2)U34. This Beutenbergia cavernae (strain ATCC BAA-8 / DSM 12333 / CCUG 43141 / JCM 11478 / NBRC 16432 / NCIMB 13614 / HKI 0122) protein is tRNA-specific 2-thiouridylase MnmA.